We begin with the raw amino-acid sequence, 256 residues long: Small ribosomal subunit protein uS2 (256 aa).

This sequence belongs to the universal ribosomal protein uS2 family.

The chain is Small ribosomal subunit protein uS2 from Streptococcus agalactiae serotype III (strain NEM316).